A 661-amino-acid polypeptide reads, in one-letter code: COBRA-like protein 7 (661 aa).

An N-terminal signal peptide occupies residues 1-26; that stretch reads MDSAPNFIPRLLLLSLLIVSIPLTSS. Residues 26 to 45 are disordered; it reads SQSDANTTNPSPSPPSDSDL. Residues Asn31, Asn64, Asn122, Asn170, Asn314, Asn327, Asn356, Asn369, Asn398, Asn410, Asn430, Asn472, Asn551, and Asn561 are each glycosylated (N-linked (GlcNAc...) asparagine). Ser637 carries GPI-anchor amidated serine lipidation. A propeptide spans 638–661 (removed in mature form); it reads SQHRKHISVFLLALPVLALLILRA.

It belongs to the COBRA family. Expressed in roots, stems, leaves, flowers and siliques.

The protein resides in the cell membrane. The chain is COBRA-like protein 7 (COBL7) from Arabidopsis thaliana (Mouse-ear cress).